Reading from the N-terminus, the 404-residue chain is G-protein coupled receptor 182 (404 aa).

The Extracellular portion of the chain corresponds to 1 to 57 (MSVKPSWGPGPSEGVTAVPTSDLGEIHNWTELLDLFNHTLSECHVELSQSTKRVVLF). Asparagine 28 and asparagine 37 each carry an N-linked (GlcNAc...) asparagine glycan. The chain crosses the membrane as a helical span at residues 58-79 (ALYLAMFVVGLVENLLVICVNW). The Cytoplasmic portion of the chain corresponds to 80-90 (RGSGRAGLMNL). A helical transmembrane segment spans residues 91-113 (YILNMAIADLGIVLSLPVWMLEV). Residues 114-127 (TLDYTWLWGSFSCR) are Extracellular-facing. Cysteine 126 and cysteine 202 are disulfide-bonded. Residues 128 to 149 (FTHYFYFVNMYSSIFFLVCLSV) form a helical membrane-spanning segment. At 150–170 (DRYVTLTSASPSWQRYQHRVR) the chain is on the cytoplasmic side. A helical transmembrane segment spans residues 171 to 193 (RAMCAGIWVLSAIIPLPEVVHIQ). Residues 194 to 217 (LVEGPEPMCLFMAPFETYSTWALA) lie on the Extracellular side of the membrane. A helical membrane pass occupies residues 218 to 239 (VALSTTILGFLLPFPLITVFNV). Topologically, residues 240 to 258 (LTACRLRQPGQPKSRRHCL) are cytoplasmic. The chain crosses the membrane as a helical span at residues 259–280 (LLCAYVAVFVMCWLPYHVTLLL). At 281–299 (LTLHGTHISLHCHLVHLLY) the chain is on the extracellular side. The helical transmembrane segment at 300–320 (FFYDVIDCFSMLHCVINPILY) threads the bilayer. The Cytoplasmic portion of the chain corresponds to 321–404 (NFLSPHFRGR…ISPTQPLTPS (84 aa)).

The protein belongs to the G-protein coupled receptor 1 family. As to expression, highly expressed in heart, skeletal muscle, immune system, adrenal gland and liver.

The protein localises to the cell membrane. Orphan receptor. The polypeptide is G-protein coupled receptor 182 (GPR182) (Homo sapiens (Human)).